Consider the following 59-residue polypeptide: UPF0391 membrane protein lpg2521 (59 aa).

2 helical membrane-spanning segments follow: residues 5 to 25 and 30 to 50; these read ALIF…GIAV and IAKI…IMGL.

This sequence belongs to the UPF0391 family.

The protein localises to the cell membrane. The chain is UPF0391 membrane protein lpg2521 from Legionella pneumophila subsp. pneumophila (strain Philadelphia 1 / ATCC 33152 / DSM 7513).